The sequence spans 162 residues: NADH-ubiquinone oxidoreductase 24 kDa subunit homolog C11E3.12, mitochondrial (162 aa).

Residues Cys88, Cys93, Cys125, and Cys129 each contribute to the [2Fe-2S] cluster site.

This sequence belongs to the complex I 24 kDa subunit family. [2Fe-2S] cluster is required as a cofactor.

The protein resides in the mitochondrion. The protein is NADH-ubiquinone oxidoreductase 24 kDa subunit homolog C11E3.12, mitochondrial of Schizosaccharomyces pombe (strain 972 / ATCC 24843) (Fission yeast).